A 79-amino-acid chain; its full sequence is RNA-binding protein Hfq (79 aa).

One can recognise a Sm domain in the interval 10-70 (DAFLNHVRKT…ISTIMPAQPI (61 aa)).

This sequence belongs to the Hfq family. In terms of assembly, homohexamer.

Functionally, RNA chaperone that binds small regulatory RNA (sRNAs) and mRNAs to facilitate mRNA translational regulation in response to envelope stress, environmental stress and changes in metabolite concentrations. Also binds with high specificity to tRNAs. This chain is RNA-binding protein Hfq, found in Ruegeria pomeroyi (strain ATCC 700808 / DSM 15171 / DSS-3) (Silicibacter pomeroyi).